A 966-amino-acid chain; its full sequence is Calsyntenin-2 (966 aa).

The signal sequence occupies residues 1–20 (MLPGRLCLVPLLLALGVGSG). Over 21-835 (GGSGDGGDSR…SIQRSSVVPS (815 aa)) the chain is Extracellular. 2 consecutive Cadherin domains span residues 46 to 162 (IETS…APTF) and 163 to 282 (KEPA…MPLF). N-linked (GlcNAc...) asparagine glycosylation is found at asparagine 58 and asparagine 100. Asparagine 344, asparagine 376, asparagine 720, and asparagine 733 each carry an N-linked (GlcNAc...) asparagine glycan. The helical transmembrane segment at 836-856 (IATVVIIISVCMLVFVVAMGV) threads the bilayer. The Cytoplasmic portion of the chain corresponds to 857 to 966 (YRVRIAHQHF…NTAGVINIWK (110 aa)). A disordered region spans residues 890–966 (NPMEKHEGPG…NTAGVINIWK (77 aa)). Residues 901-916 (GEDETTEVEEEEEAEE) are compositionally biased toward acidic residues. A compositionally biased stretch (polar residues) spans 943–960 (QSGTSSQSPERSTWNTAG).

This sequence belongs to the calsyntenin family. In terms of processing, proteolytically processed under normal cellular conditions. A primary zeta-cleavage generates a large extracellular (soluble) N-terminal domain (sAlc) and a short C-terminal transmembrane fragment (CTF1). A secondary cleavage catalyzed by gamma-secretase within the transmembrane domain releases the beta-Alc-gamma chain in the extracellular milieu and produces an intracellular fragment (AlcICD). This processing is strongly suppressed in the tripartite complex formed with APBA2 and APP, which seems to prevent the association with PSEN1. In terms of tissue distribution, restricted to the brain. In the cerebral cortex, found in the somas and neuropil of all layers. Expressed at highest levels in neurons of cortical layers 5 and 6 and, at lower levels, in neurons of the upper layers. Highly expressed in Purkinje cells. Also found in a few scattered interneurons throughout the granule cell layer and occasionally in neurons in the molecular layer (at protein level). Present throughout all cortical layers, highest levels in GABAergic neurons (based on morphology and distribution pattern).

It is found in the postsynaptic cell membrane. It localises to the endoplasmic reticulum membrane. The protein resides in the golgi apparatus membrane. The protein localises to the cell projection. Its subcellular location is the dendrite. Its function is as follows. Postsynaptic adhesion molecule that binds to presynaptic neurexins to mediate synapse formation, and which is involved in learning and memory. Promotes synapse development by acting as a cell adhesion molecule at the postsynaptic membrane, which associates with neurexin-alpha at the presynaptic membrane. The sequence is that of Calsyntenin-2 from Mus musculus (Mouse).